Reading from the N-terminus, the 259-residue chain is Phosphate import ATP-binding protein PstB (259 aa).

One can recognise an ABC transporter domain in the interval 13–254 (LEVNNLNFHY…PRLQRTEDYI (242 aa)). 45–52 (GPSGCGKS) contacts ATP.

The protein belongs to the ABC transporter superfamily. Phosphate importer (TC 3.A.1.7) family. In terms of assembly, the complex is composed of two ATP-binding proteins (PstB), two transmembrane proteins (PstC and PstA) and a solute-binding protein (PstS).

The protein localises to the cell inner membrane. It catalyses the reaction phosphate(out) + ATP + H2O = ADP + 2 phosphate(in) + H(+). Functionally, part of the ABC transporter complex PstSACB involved in phosphate import. Responsible for energy coupling to the transport system. The sequence is that of Phosphate import ATP-binding protein PstB from Pasteurella multocida (strain Pm70).